The primary structure comprises 385 residues: Aldehyde dehydrogenase family 3 member B2 (385 aa).

Residue 107–112 coordinates NAD(+); that stretch reads GSPRVG. Active-site residues include E129 and C163. C382 bears the Cysteine methyl ester mark. C382 carries S-geranylgeranyl cysteine lipidation. Residues 383-385 constitute a propeptide, removed in mature form; it reads TLL.

This sequence belongs to the aldehyde dehydrogenase family. In terms of processing, geranylgeranylation is important for localization to lipid droplets and enzyme activity. In terms of tissue distribution, salivary gland. Expressed at protein level in placenta.

The protein resides in the lipid droplet. It carries out the reaction an aldehyde + NAD(+) + H2O = a carboxylate + NADH + 2 H(+). The enzyme catalyses a long-chain fatty aldehyde + NAD(+) + H2O = a long-chain fatty acid + NADH + 2 H(+). It catalyses the reaction a medium-chain fatty aldehyde + NAD(+) + H2O = a medium-chain fatty acid + NADH + 2 H(+). The catalysed reaction is hexadecanoate + NADH + 2 H(+) = hexadecanal + NAD(+) + H2O. It carries out the reaction octanal + NAD(+) + H2O = octanoate + NADH + 2 H(+). It participates in alcohol metabolism; ethanol degradation; acetate from ethanol: step 2/2. In terms of biological role, oxidizes medium and long chain fatty aldehydes in lipid droplets into non-toxic fatty acids. This chain is Aldehyde dehydrogenase family 3 member B2 (ALDH3B2), found in Homo sapiens (Human).